A 111-amino-acid chain; its full sequence is Class I hydrophobin SC4 (111 aa).

The first 25 residues, 1-25 (MRFSLALLALPALAAAAPVPGGGKG), serve as a signal peptide directing secretion. 4 disulfides stabilise this stretch: Cys30–Cys37, Cys38–Cys72, Cys86–Cys92, and Cys93–Cys106. A glycan (N-linked (GlcNAc...) asparagine) is linked at Asn39.

This sequence belongs to the fungal hydrophobin family. As to quaternary structure, self-assembles to form functional amyloid fibrils called rodlets. Self-assembly into fibrillar rodlets occurs spontaneously at hydrophobic:hydrophilic interfaces and the rodlets further associate laterally to form amphipathic monolayers.

It is found in the secreted. The protein localises to the cell wall. In terms of biological role, aerial growth, conidiation, and dispersal of filamentous fungi in the environment rely upon a capability of their secreting small amphipathic proteins called hydrophobins (HPBs) with low sequence identity. Class I can self-assemble into an outermost layer of rodlet bundles on aerial cell surfaces, conferring cellular hydrophobicity that supports fungal growth, development and dispersal; whereas Class II form highly ordered films at water-air interfaces through intermolecular interactions but contribute nothing to the rodlet structure. SC4 is a dikaryon-specific class I hydrophobin that contributes to the formation of aerial hyphae and fruiting bodies. Plays a role within fruiting bodies by preventing gas channels filling with water under wet conditions, probably serving uninterrupted gas exchange. SC4 cannot fully substitute for SC3. Involved in the unusual characteristic of mounds to adhere to and completely envelop adjacent fruiting bodies on mosaic colonies. The polypeptide is Class I hydrophobin SC4 (Schizophyllum commune (Split gill fungus)).